The sequence spans 876 residues: Leucine--tRNA ligase (876 aa).

The 'HIGH' region signature appears at 43–53; the sequence is PYPSGRIHMGH. Residues 630–634 carry the 'KMSKS' region motif; sequence KMSKS. Residue K633 participates in ATP binding.

It belongs to the class-I aminoacyl-tRNA synthetase family.

It is found in the cytoplasm. The enzyme catalyses tRNA(Leu) + L-leucine + ATP = L-leucyl-tRNA(Leu) + AMP + diphosphate. The protein is Leucine--tRNA ligase of Methylocella silvestris (strain DSM 15510 / CIP 108128 / LMG 27833 / NCIMB 13906 / BL2).